We begin with the raw amino-acid sequence, 655 residues long: Fidgetin-like protein 1 (655 aa).

The disordered stretch occupies residues 289–313 (QQKKHSNQPQRNPGPLYGGGKKSLG). ATP-binding positions include A385 and 425–430 (GTGKTL).

It belongs to the AAA ATPase family. As to quaternary structure, hexamer. The cofactor is Mg(2+).

It is found in the nucleus. Its subcellular location is the cytoplasm. It localises to the perinuclear region. The enzyme catalyses ATP + H2O = ADP + phosphate + H(+). Its function is as follows. May be involved in DNA double-strand break (DBS) repair via homologous recombination (HR). May regulate osteoblast proliferation and differentiation. The chain is Fidgetin-like protein 1 (fignl1) from Xenopus laevis (African clawed frog).